Here is a 182-residue protein sequence, read N- to C-terminus: Small ribosomal subunit protein uS4c (182 aa).

The S4 RNA-binding domain maps to methionine 82–asparagine 143.

This sequence belongs to the universal ribosomal protein uS4 family. Part of the 30S ribosomal subunit. Contacts protein S5. The interaction surface between S4 and S5 is involved in control of translational fidelity.

The protein resides in the plastid. The protein localises to the chloroplast. One of the primary rRNA binding proteins, it binds directly to 16S rRNA where it nucleates assembly of the body of the 30S subunit. Functionally, with S5 and S12 plays an important role in translational accuracy. The protein is Small ribosomal subunit protein uS4c (rps4) of Tigridia sp. (strain Lejeune 1997).